A 167-amino-acid chain; its full sequence is Putative pre-16S rRNA nuclease (167 aa).

This sequence belongs to the YqgF nuclease family.

Its subcellular location is the cytoplasm. Could be a nuclease involved in processing of the 5'-end of pre-16S rRNA. This is Putative pre-16S rRNA nuclease from Streptomyces coelicolor (strain ATCC BAA-471 / A3(2) / M145).